Consider the following 467-residue polypeptide: ADAM DEC1 (467 aa).

Positions 1-33 (MLPGTSRLPTEASMSWVLLSVLWLIIQIQVIDA) are cleaved as a signal peptide. The propeptide occupies 34-208 (TLTPELKPHE…LRTSRSLKNP (175 aa)). 2 N-linked (GlcNAc...) asparagine glycosylation sites follow: Asn-61 and Asn-236. Residues 217-411 (KYIGLFLVLD…RNARCLLLAP (195 aa)) form the Peptidase M12B domain. Intrachain disulfides connect Cys-327–Cys-406 and Cys-368–Cys-373. Position 351 (His-351) interacts with Zn(2+). Glu-352 is a catalytic residue. Zn(2+)-binding residues include His-355 and Asp-361. Residues 418–467 (KPTCGNQVLDVGEECDCGSPEECTNLCCEPLTCRLKSQPDCSEASNHITE) enclose the Disintegrin domain.

The cofactor is Zn(2+). In terms of tissue distribution, expressed highly in uterus during pregnancy.

It localises to the secreted. In terms of biological role, may play an important role in the control of the immune response and during pregnancy. This is ADAM DEC1 (Adamdec1) from Mus musculus (Mouse).